The sequence spans 134 residues: DNA-binding protein StpA (134 aa).

Positions 73 to 94 (EELLGNSSAAAPRAGKKRQPRP) are disordered. A DNA-binding region spans residues 112–117 (QGRTPK).

Belongs to the histone-like protein H-NS family. Forms homodimers, can interact with H-NS. May interact with Hha and/or Cnu.

Its subcellular location is the cytoplasm. It is found in the nucleoid. A DNA-binding protein that acts in a fashion similar to H-NS, repressing gene transcription. A subset of H-NS/StpA-regulated genes require auxillary proteins for repression; these auxillary proteins (Hha and other similar proteins) may also modulate oligomerization of the H-NS/StpA complex. The protein is DNA-binding protein StpA (stpA) of Escherichia coli O157:H7.